The chain runs to 524 residues: Bifunctional methyltransferase (524 aa).

The hemK stretch occupies residues 1 to 306 (MQCSIKQILS…GHSRVILFSP (306 aa)). The segment at 1 to 308 (MQCSIKQILS…SRVILFSPIN (308 aa)) is RF MTase. Residues 146-150 (GTGSG), Asp-169, Trp-198, Asn-213, Glu-353, Glu-378, Asn-405, and Asp-427 each bind S-adenosyl-L-methionine. Residue 213-216 (NPPY) participates in substrate binding. The tRNA (guanine-N(7)-)-methyltransferase stretch occupies residues 307–524 (INLNRSYARR…MILRHVLGDH (218 aa)). The tRNA MTase stretch occupies residues 311–524 (RSYARRIGKS…MILRHVLGDH (214 aa)). Asp-427 is an active-site residue. Substrate contacts are provided by Lys-431 and Asp-463.

This sequence in the C-terminal section; belongs to the class I-like SAM-binding methyltransferase superfamily. TrmB family. It in the N-terminal section; belongs to the protein N5-glutamine methyltransferase family. PrmC subfamily.

The enzyme catalyses L-glutaminyl-[peptide chain release factor] + S-adenosyl-L-methionine = N(5)-methyl-L-glutaminyl-[peptide chain release factor] + S-adenosyl-L-homocysteine + H(+). The catalysed reaction is guanosine(46) in tRNA + S-adenosyl-L-methionine = N(7)-methylguanosine(46) in tRNA + S-adenosyl-L-homocysteine. Its function is as follows. Methylates the class 1 translation termination release factors RF1/PrfA and RF2/PrfB on the glutamine residue of the universally conserved GGQ motif. In terms of biological role, catalyzes the formation of N(7)-methylguanine at position 46 (m7G46) in tRNA. The polypeptide is Bifunctional methyltransferase (prmC/trmB) (Rickettsia conorii (strain ATCC VR-613 / Malish 7)).